The sequence spans 289 residues: MSTRIAFLKGHGTENDFVIVPDPENALDLPPAAVAALCDRRAGLGGDGLLHVVRSAAHPEARGMAAEAEWFMDYRNGDGSVAEMCGNGVRVFARYLQHAGHVTEGDLAVATRGGVKTVHIAKNGDVTVGMGRALLPAGDVEVSVGEREWPARNVNMGNPHAVAFVADLDHAGDLYAPPSHAPAGAYPDGVNVEFVVDRGPRHVAMRVHERGSGETRSCGTGACAVAVATARRDGLDPAATGTPATYTVDVPGGTLVITERPDGEIEMTGPAVIVAEGEFDSAWLEGVLA.

N15 and N76 together coordinate substrate. The active-site Proton donor is C85. Residues G86–N87, N158, N191, and E209–R210 each bind substrate. The active-site Proton acceptor is the C218. G219–T220 is a binding site for substrate.

This sequence belongs to the diaminopimelate epimerase family. In terms of assembly, homodimer.

The protein localises to the cytoplasm. It catalyses the reaction (2S,6S)-2,6-diaminopimelate = meso-2,6-diaminopimelate. It participates in amino-acid biosynthesis; L-lysine biosynthesis via DAP pathway; DL-2,6-diaminopimelate from LL-2,6-diaminopimelate: step 1/1. Its function is as follows. Catalyzes the stereoinversion of LL-2,6-diaminopimelate (L,L-DAP) to meso-diaminopimelate (meso-DAP), a precursor of L-lysine and an essential component of the bacterial peptidoglycan. The polypeptide is Diaminopimelate epimerase (Streptomyces coelicolor (strain ATCC BAA-471 / A3(2) / M145)).